A 318-amino-acid polypeptide reads, in one-letter code: Pantothenate kinase (318 aa).

96–103 contacts ATP; it reads GSVAVGKS.

The protein belongs to the prokaryotic pantothenate kinase family.

It localises to the cytoplasm. It catalyses the reaction (R)-pantothenate + ATP = (R)-4'-phosphopantothenate + ADP + H(+). The protein operates within cofactor biosynthesis; coenzyme A biosynthesis; CoA from (R)-pantothenate: step 1/5. The polypeptide is Pantothenate kinase (Rhodopseudomonas palustris (strain BisA53)).